Reading from the N-terminus, the 466-residue chain is Ribosomal protein uS12 methylthiotransferase RimO (466 aa).

The 111-residue stretch at 31 to 141 (PTIGMVSLGC…VLDAVHGAVP (111 aa)) folds into the MTTase N-terminal domain. Cysteine 40, cysteine 76, cysteine 105, cysteine 172, cysteine 176, and cysteine 179 together coordinate [4Fe-4S] cluster. The Radical SAM core domain occupies 158-397 (LTPRHYSYLK…MAKAQAISEA (240 aa)). In terms of domain architecture, TRAM spans 400–466 (AARVGQVIEV…GEYDLWGRLR (67 aa)).

It belongs to the methylthiotransferase family. RimO subfamily. [4Fe-4S] cluster serves as cofactor.

Its subcellular location is the cytoplasm. It catalyses the reaction L-aspartate(89)-[ribosomal protein uS12]-hydrogen + (sulfur carrier)-SH + AH2 + 2 S-adenosyl-L-methionine = 3-methylsulfanyl-L-aspartate(89)-[ribosomal protein uS12]-hydrogen + (sulfur carrier)-H + 5'-deoxyadenosine + L-methionine + A + S-adenosyl-L-homocysteine + 2 H(+). Its function is as follows. Catalyzes the methylthiolation of an aspartic acid residue of ribosomal protein uS12. The chain is Ribosomal protein uS12 methylthiotransferase RimO from Ruegeria pomeroyi (strain ATCC 700808 / DSM 15171 / DSS-3) (Silicibacter pomeroyi).